The chain runs to 100 residues: Urease subunit gamma (100 aa).

It belongs to the urease gamma subunit family. In terms of assembly, heterotrimer of UreA (gamma), UreB (beta) and UreC (alpha) subunits. Three heterotrimers associate to form the active enzyme.

Its subcellular location is the cytoplasm. It catalyses the reaction urea + 2 H2O + H(+) = hydrogencarbonate + 2 NH4(+). It functions in the pathway nitrogen metabolism; urea degradation; CO(2) and NH(3) from urea (urease route): step 1/1. The sequence is that of Urease subunit gamma from Staphylococcus xylosus.